The primary structure comprises 195 residues: Imidazoleglycerol-phosphate dehydratase (195 aa).

It belongs to the imidazoleglycerol-phosphate dehydratase family.

The protein localises to the cytoplasm. It catalyses the reaction D-erythro-1-(imidazol-4-yl)glycerol 3-phosphate = 3-(imidazol-4-yl)-2-oxopropyl phosphate + H2O. The protein operates within amino-acid biosynthesis; L-histidine biosynthesis; L-histidine from 5-phospho-alpha-D-ribose 1-diphosphate: step 6/9. This Haloarcula marismortui (strain ATCC 43049 / DSM 3752 / JCM 8966 / VKM B-1809) (Halobacterium marismortui) protein is Imidazoleglycerol-phosphate dehydratase.